We begin with the raw amino-acid sequence, 128 residues long: Large ribosomal subunit protein bL17 (128 aa).

This sequence belongs to the bacterial ribosomal protein bL17 family. In terms of assembly, part of the 50S ribosomal subunit. Contacts protein L32.

In Streptococcus equi subsp. zooepidemicus (strain H70), this protein is Large ribosomal subunit protein bL17.